The sequence spans 279 residues: Reaction center protein L chain (279 aa).

Transmembrane regions (helical) follow at residues 33 to 56 (GFFGVTTLFFSVLGTALIIWGASQ), 85 to 113 (GLWQIITVCAIGAFVSWALREVEICRKLG), and 116 to 141 (YHVPIAFSFAILAYVTLVVIRPILMG). 2 residues coordinate (7R,8Z)-bacteriochlorophyll b: histidine 154 and histidine 174. Residues 171–200 (NPAHMLAITFFFTTTLAMSMHGGLILSAAN) form a helical membrane-spanning segment. Position 191 (histidine 191) interacts with Fe cation. Phenylalanine 217 serves as a coordination point for a ubiquinone. Residues 226–252 (GSLGIHRLGLFLALSAAFWSAVCIVIS) form a helical membrane-spanning segment. Histidine 231 provides a ligand contact to Fe cation.

This sequence belongs to the reaction center PufL/M/PsbA/D family. As to quaternary structure, reaction center is composed of four bacteriochlorophylls, two bacteriopheophytins, two ubiquinones, one iron, and three highly hydrophobic polypeptide chains (designated L, M, and H).

The protein localises to the cell inner membrane. Functionally, the reaction center is a membrane-bound complex that mediates the initial photochemical event in the electron transfer process of photosynthesis. In Rubrivivax gelatinosus (Rhodocyclus gelatinosus), this protein is Reaction center protein L chain (pufL).